The following is a 268-amino-acid chain: GTP cyclohydrolase FolE2 (268 aa).

Belongs to the GTP cyclohydrolase IV family.

The enzyme catalyses GTP + H2O = 7,8-dihydroneopterin 3'-triphosphate + formate + H(+). It participates in cofactor biosynthesis; 7,8-dihydroneopterin triphosphate biosynthesis; 7,8-dihydroneopterin triphosphate from GTP: step 1/1. Its function is as follows. Converts GTP to 7,8-dihydroneopterin triphosphate. The chain is GTP cyclohydrolase FolE2 from Janthinobacterium sp. (strain Marseille) (Minibacterium massiliensis).